The chain runs to 166 residues: Protein E6 (166 aa).

Zinc fingers lie at residues 50–86 (CNFCGKFLSHLEACEFDDKRLSLIWKGHLVYACCRWC) and 123–159 (CQNCMRYLDSIEKLDICGRRLPFHKVRDSWKGICRLC).

Belongs to the papillomaviridae E6 protein family. As to quaternary structure, forms homodimers. Interacts with ubiquitin-protein ligase UBE3A/E6-AP; this interaction stimulates UBE3A ubiquitin activity. Interacts with host BAK1.

The protein localises to the host cytoplasm. It is found in the host nucleus. Functionally, plays a major role in the induction and maintenance of cellular transformation. E6 associates with host UBE3A/E6-AP ubiquitin-protein ligase and modulates its activity. Protects host keratinocytes from apoptosis by mediating the degradation of host BAK1. May also inhibit host immune response. The sequence is that of Protein E6 from Homo sapiens (Human).